Reading from the N-terminus, the 128-residue chain is Sulfurtransferase TusD (128 aa).

Cys78 serves as the catalytic Cysteine persulfide intermediate.

It belongs to the DsrE/TusD family. Heterohexamer, formed by a dimer of trimers. The hexameric TusBCD complex contains 2 copies each of TusB, TusC and TusD. The TusBCD complex interacts with TusE.

It is found in the cytoplasm. Functionally, part of a sulfur-relay system required for 2-thiolation of 5-methylaminomethyl-2-thiouridine (mnm(5)s(2)U) at tRNA wobble positions. Accepts sulfur from TusA and transfers it in turn to TusE. The polypeptide is Sulfurtransferase TusD (Cronobacter sakazakii (strain ATCC BAA-894) (Enterobacter sakazakii)).